The chain runs to 111 residues: Large ribosomal subunit protein uL22 (111 aa).

The protein belongs to the universal ribosomal protein uL22 family. As to quaternary structure, part of the 50S ribosomal subunit.

This protein binds specifically to 23S rRNA; its binding is stimulated by other ribosomal proteins, e.g. L4, L17, and L20. It is important during the early stages of 50S assembly. It makes multiple contacts with different domains of the 23S rRNA in the assembled 50S subunit and ribosome. Its function is as follows. The globular domain of the protein is located near the polypeptide exit tunnel on the outside of the subunit, while an extended beta-hairpin is found that lines the wall of the exit tunnel in the center of the 70S ribosome. This chain is Large ribosomal subunit protein uL22, found in Chlamydia muridarum (strain MoPn / Nigg).